The following is a 413-amino-acid chain: Mitochondrial inner membrane magnesium transporter MFM1 (413 aa).

Residues 1–35 (MRAFPRVLPFRHQRSYNNILLRTVRLFGSSLSSFD) constitute a mitochondrion transit peptide. An N-linked (GlcNAc...) asparagine glycan is attached at Asn-202. Residues 329-349 (LMLLGIRYAIGMLSLGGALFL) traverse the membrane as a helical segment. The YGMN motif lies at 353 to 356 (YGMN). The chain crosses the membrane as a helical span at residues 367 to 387 (AYLTVTILGLISTVWLYAKGI).

Belongs to the CorA metal ion transporter (MIT) (TC 1.A.35) family. In terms of assembly, forms homooligomers. Interacts with MRS2. In terms of processing, N-glycosylated. Glycosylation is important for correct localization of the protein.

It localises to the mitochondrion inner membrane. In terms of biological role, mitochondrial inner membrane magnesium transporter required for mitochondrial magnesium homeostasis. Modulates the conductance of the MRS2 channel. Involved in the splicing of mRNA group II introns in mitochondria by affecting mitochondrial magnesium concentrations, which are critical for group II intron splicing. This is Mitochondrial inner membrane magnesium transporter MFM1 (MFM1) from Saccharomyces cerevisiae (strain ATCC 204508 / S288c) (Baker's yeast).